Reading from the N-terminus, the 397-residue chain is Succinate--CoA ligase [ADP-forming] subunit beta (397 aa).

The 246-residue stretch at 9–254 (KALLKGYGAP…ETEEDAKEIE (246 aa)) folds into the ATP-grasp domain. Residues K46, 53–55 (GRG), E109, A112, and E117 contribute to the ATP site. Mg(2+)-binding residues include N209 and D223. Residues N274 and 331-333 (GIM) each bind substrate.

The protein belongs to the succinate/malate CoA ligase beta subunit family. Heterotetramer of two alpha and two beta subunits. Requires Mg(2+) as cofactor.

It catalyses the reaction succinate + ATP + CoA = succinyl-CoA + ADP + phosphate. The catalysed reaction is GTP + succinate + CoA = succinyl-CoA + GDP + phosphate. The protein operates within carbohydrate metabolism; tricarboxylic acid cycle; succinate from succinyl-CoA (ligase route): step 1/1. Functionally, succinyl-CoA synthetase functions in the citric acid cycle (TCA), coupling the hydrolysis of succinyl-CoA to the synthesis of either ATP or GTP and thus represents the only step of substrate-level phosphorylation in the TCA. The beta subunit provides nucleotide specificity of the enzyme and binds the substrate succinate, while the binding sites for coenzyme A and phosphate are found in the alpha subunit. This Rhizobium etli (strain ATCC 51251 / DSM 11541 / JCM 21823 / NBRC 15573 / CFN 42) protein is Succinate--CoA ligase [ADP-forming] subunit beta.